Reading from the N-terminus, the 300-residue chain is Ribosomal protein L11 methyltransferase (300 aa).

The S-adenosyl-L-methionine site is built by T144, G165, D187, and N235.

This sequence belongs to the methyltransferase superfamily. PrmA family.

It localises to the cytoplasm. The enzyme catalyses L-lysyl-[protein] + 3 S-adenosyl-L-methionine = N(6),N(6),N(6)-trimethyl-L-lysyl-[protein] + 3 S-adenosyl-L-homocysteine + 3 H(+). Methylates ribosomal protein L11. In Prochlorococcus marinus (strain MIT 9515), this protein is Ribosomal protein L11 methyltransferase.